Reading from the N-terminus, the 449-residue chain is Probable glycine dehydrogenase (decarboxylating) subunit 1 (449 aa).

The protein belongs to the GcvP family. N-terminal subunit subfamily. As to quaternary structure, the glycine cleavage system is composed of four proteins: P, T, L and H. In this organism, the P 'protein' is a heterodimer of two subunits.

The enzyme catalyses N(6)-[(R)-lipoyl]-L-lysyl-[glycine-cleavage complex H protein] + glycine + H(+) = N(6)-[(R)-S(8)-aminomethyldihydrolipoyl]-L-lysyl-[glycine-cleavage complex H protein] + CO2. Functionally, the glycine cleavage system catalyzes the degradation of glycine. The P protein binds the alpha-amino group of glycine through its pyridoxal phosphate cofactor; CO(2) is released and the remaining methylamine moiety is then transferred to the lipoamide cofactor of the H protein. This is Probable glycine dehydrogenase (decarboxylating) subunit 1 from Solibacter usitatus (strain Ellin6076).